Reading from the N-terminus, the 213-residue chain is MIPAPPFLQATALTCERDGRMLFENLDLQVRTGDMLQVSGPNGSGKTSLLRLLCGLMQPTAGHVLLNGQPAGRQPTAPGLNLLWVGHASALKDLLTPLENLSWLCALHHPADADAIFNALDAVGLAGFEDVPCHTLSAGQQRRVALARLYLPGPPLWLLDEPFTALDRQGIAQLENHLAGHCEKGGMIIMTTHHTLSRLPAGYRDIDLGQWAA.

Residues 8–213 form the ABC transporter domain; that stretch reads LQATALTCER…RDIDLGQWAA (206 aa). An ATP-binding site is contributed by 40-47; the sequence is GPNGSGKT.

Belongs to the ABC transporter superfamily. CcmA exporter (TC 3.A.1.107) family. In terms of assembly, the complex is composed of two ATP-binding proteins (CcmA) and two transmembrane proteins (CcmB).

Its subcellular location is the cell inner membrane. The enzyme catalyses heme b(in) + ATP + H2O = heme b(out) + ADP + phosphate + H(+). Part of the ABC transporter complex CcmAB involved in the biogenesis of c-type cytochromes; once thought to export heme, this seems not to be the case, but its exact role is uncertain. Responsible for energy coupling to the transport system. In Pseudomonas savastanoi pv. phaseolicola (strain 1448A / Race 6) (Pseudomonas syringae pv. phaseolicola (strain 1448A / Race 6)), this protein is Cytochrome c biogenesis ATP-binding export protein CcmA.